The primary structure comprises 255 residues: uncharacterized protein (255 aa).

Positions 6, 8, 92, 128, 153, and 203 each coordinate a divalent metal cation.

Belongs to the metallo-dependent hydrolases superfamily. TatD-type hydrolase family. A divalent metal cation serves as cofactor.

This is an uncharacterized protein from Bacillus subtilis (strain 168).